A 163-amino-acid polypeptide reads, in one-letter code: Thiol peroxidase (163 aa).

The Thioredoxin domain maps to 16-162 (LQVGDKALDF…FEAAIAAAKA (147 aa)). Residue Cys58 is the Cysteine sulfenic acid (-SOH) intermediate of the active site. A disulfide bond links Cys58 and Cys92.

This sequence belongs to the peroxiredoxin family. Tpx subfamily. Homodimer.

The enzyme catalyses a hydroperoxide + [thioredoxin]-dithiol = an alcohol + [thioredoxin]-disulfide + H2O. Functionally, thiol-specific peroxidase that catalyzes the reduction of hydrogen peroxide and organic hydroperoxides to water and alcohols, respectively. Plays a role in cell protection against oxidative stress by detoxifying peroxides. The chain is Thiol peroxidase from Streptococcus pneumoniae serotype 2 (strain D39 / NCTC 7466).